The chain runs to 509 residues: ATP synthase subunit beta (509 aa).

An ATP-binding site is contributed by 167-174 (GGAGVGKT). Residues 476–509 (ESLGAKMEDTSGDGAPAQSDSKSDSKGDDADKDA) form a disordered region. Residues 496–509 (SKSDSKGDDADKDA) show a composition bias toward basic and acidic residues.

It belongs to the ATPase alpha/beta chains family. As to quaternary structure, F-type ATPases have 2 components, CF(1) - the catalytic core - and CF(0) - the membrane proton channel. CF(1) has five subunits: alpha(3), beta(3), gamma(1), delta(1), epsilon(1). CF(0) has three main subunits: a(1), b(2) and c(9-12). The alpha and beta chains form an alternating ring which encloses part of the gamma chain. CF(1) is attached to CF(0) by a central stalk formed by the gamma and epsilon chains, while a peripheral stalk is formed by the delta and b chains.

The protein localises to the cell membrane. It catalyses the reaction ATP + H2O + 4 H(+)(in) = ADP + phosphate + 5 H(+)(out). Produces ATP from ADP in the presence of a proton gradient across the membrane. The catalytic sites are hosted primarily by the beta subunits. This is ATP synthase subunit beta from Mycobacterium sp. (strain KMS).